Consider the following 464-residue polypeptide: UDP-N-acetylmuramoylalanine--D-glutamate ligase (464 aa).

112–118 (GTDGKTT) lines the ATP pocket.

This sequence belongs to the MurCDEF family.

The protein resides in the cytoplasm. The enzyme catalyses UDP-N-acetyl-alpha-D-muramoyl-L-alanine + D-glutamate + ATP = UDP-N-acetyl-alpha-D-muramoyl-L-alanyl-D-glutamate + ADP + phosphate + H(+). The protein operates within cell wall biogenesis; peptidoglycan biosynthesis. In terms of biological role, cell wall formation. Catalyzes the addition of glutamate to the nucleotide precursor UDP-N-acetylmuramoyl-L-alanine (UMA). The polypeptide is UDP-N-acetylmuramoylalanine--D-glutamate ligase (Chlorobium chlorochromatii (strain CaD3)).